Reading from the N-terminus, the 787-residue chain is Endonuclease MutS2 (787 aa).

ATP is bound at residue 329 to 336; sequence GPNTGGKT. The region spanning 712–787 is the Smr domain; the sequence is INLLGCTVDE…DAGVTIVDFK (76 aa).

Belongs to the DNA mismatch repair MutS family. MutS2 subfamily. In terms of assembly, homodimer. Binds to stalled ribosomes, contacting rRNA.

In terms of biological role, endonuclease that is involved in the suppression of homologous recombination and thus may have a key role in the control of bacterial genetic diversity. Acts as a ribosome collision sensor, splitting the ribosome into its 2 subunits. Detects stalled/collided 70S ribosomes which it binds and splits by an ATP-hydrolysis driven conformational change. Acts upstream of the ribosome quality control system (RQC), a ribosome-associated complex that mediates the extraction of incompletely synthesized nascent chains from stalled ribosomes and their subsequent degradation. Probably generates substrates for RQC. In Lachnospira eligens (strain ATCC 27750 / DSM 3376 / VPI C15-48 / C15-B4) (Eubacterium eligens), this protein is Endonuclease MutS2.